The primary structure comprises 151 residues: MFDIGFLELLICGVIALLVLGPERLPTAARAAGRWIGGARRMVSQFTSELDRQLKAEELREELRKAGDVGLDDVEKTVRGALDEAKKYEHMILPDDQTRKPRPAPATRRVTPPSPEAGEQPEPPHEPVRDEAAASDQPSDSSPTSPSDKYS.

The helical transmembrane segment at 1–21 (MFDIGFLELLICGVIALLVLG) threads the bilayer. Basic and acidic residues-rich tracts occupy residues 87-99 (KYEHMILPDDQTR) and 122-132 (EPPHEPVRDEA). The tract at residues 87–151 (KYEHMILPDD…SPTSPSDKYS (65 aa)) is disordered. Residues 134-151 (ASDQPSDSSPTSPSDKYS) show a composition bias toward low complexity.

Belongs to the TatB family. In terms of assembly, the Tat system comprises two distinct complexes: a TatABC complex, containing multiple copies of TatA, TatB and TatC subunits, and a separate TatA complex, containing only TatA subunits. Substrates initially bind to the TatABC complex, which probably triggers association of the separate TatA complex to form the active translocon.

Its subcellular location is the cell inner membrane. Functionally, part of the twin-arginine translocation (Tat) system that transports large folded proteins containing a characteristic twin-arginine motif in their signal peptide across membranes. Together with TatC, TatB is part of a receptor directly interacting with Tat signal peptides. TatB may form an oligomeric binding site that transiently accommodates folded Tat precursor proteins before their translocation. This is Sec-independent protein translocase protein TatB from Marinobacter nauticus (strain ATCC 700491 / DSM 11845 / VT8) (Marinobacter aquaeolei).